A 271-amino-acid polypeptide reads, in one-letter code: Bifunctional protein FolD (271 aa).

NADP(+) contacts are provided by residues 154-156 (GRS), Ser-181, and Ile-222.

Belongs to the tetrahydrofolate dehydrogenase/cyclohydrolase family. As to quaternary structure, homodimer.

The enzyme catalyses (6R)-5,10-methylene-5,6,7,8-tetrahydrofolate + NADP(+) = (6R)-5,10-methenyltetrahydrofolate + NADPH. It catalyses the reaction (6R)-5,10-methenyltetrahydrofolate + H2O = (6R)-10-formyltetrahydrofolate + H(+). The protein operates within one-carbon metabolism; tetrahydrofolate interconversion. In terms of biological role, catalyzes the oxidation of 5,10-methylenetetrahydrofolate to 5,10-methenyltetrahydrofolate and then the hydrolysis of 5,10-methenyltetrahydrofolate to 10-formyltetrahydrofolate. This chain is Bifunctional protein FolD, found in Thermotoga petrophila (strain ATCC BAA-488 / DSM 13995 / JCM 10881 / RKU-1).